A 402-amino-acid chain; its full sequence is Tryptophan synthase beta chain (402 aa).

Lysine 91 carries the post-translational modification N6-(pyridoxal phosphate)lysine.

Belongs to the TrpB family. As to quaternary structure, tetramer of two alpha and two beta chains. Requires pyridoxal 5'-phosphate as cofactor.

It carries out the reaction (1S,2R)-1-C-(indol-3-yl)glycerol 3-phosphate + L-serine = D-glyceraldehyde 3-phosphate + L-tryptophan + H2O. The protein operates within amino-acid biosynthesis; L-tryptophan biosynthesis; L-tryptophan from chorismate: step 5/5. Its function is as follows. The beta subunit is responsible for the synthesis of L-tryptophan from indole and L-serine. The sequence is that of Tryptophan synthase beta chain from Streptococcus thermophilus (strain ATCC BAA-491 / LMD-9).